Reading from the N-terminus, the 163-residue chain is Phosphopantetheine adenylyltransferase (163 aa).

Thr10 contacts substrate. Residues 10–11 (TF) and His18 each bind ATP. Lys42, Leu74, and Arg88 together coordinate substrate. Residues 89-91 (GLR), Glu99, and 124-130 (NSFISST) contribute to the ATP site.

This sequence belongs to the bacterial CoaD family. Homohexamer. Mg(2+) is required as a cofactor.

The protein resides in the cytoplasm. The enzyme catalyses (R)-4'-phosphopantetheine + ATP + H(+) = 3'-dephospho-CoA + diphosphate. The protein operates within cofactor biosynthesis; coenzyme A biosynthesis; CoA from (R)-pantothenate: step 4/5. Its function is as follows. Reversibly transfers an adenylyl group from ATP to 4'-phosphopantetheine, yielding dephospho-CoA (dPCoA) and pyrophosphate. The protein is Phosphopantetheine adenylyltransferase of Shewanella baltica (strain OS195).